The following is a 112-amino-acid chain: UPF0060 membrane protein IL2332 (112 aa).

The next 4 membrane-spanning stretches (helical) occupy residues 10 to 30 (LGLF…PYLW), 36 to 56 (SAWL…LLTL), 64 to 84 (VYAA…KAVE), and 90 to 110 (TYDA…AVGW).

It belongs to the UPF0060 family.

Its subcellular location is the cell inner membrane. The polypeptide is UPF0060 membrane protein IL2332 (Idiomarina loihiensis (strain ATCC BAA-735 / DSM 15497 / L2-TR)).